Reading from the N-terminus, the 809-residue chain is E3 ubiquitin-protein ligase RSP5 (809 aa).

Residues 1 to 105 enclose the C2 domain; it reads MPSSISVKLV…GHLDEDTATS (105 aa). Disordered regions lie at residues 99–122, 139–240, and 257–298; these read DEDT…KKSN, PSSS…RRTD, and WKRP…DNSS. A compositionally biased stretch (basic and acidic residues) spans 108–122; it reads RPREETITRDLKKSN. The segment covering 139 to 148 has biased composition (polar residues); it reads PSSSPHSQAP. The segment covering 149 to 183 has biased composition (low complexity); it reads SGHTASSSTNTSSTTRTNGHSTSSTRNHSTSHPSR. Positions 184 to 196 are enriched in polar residues; it reads GTAQAVESTLQSG. Positions 197-219 are enriched in low complexity; the sequence is TTAATNTATTSHRSTNSTSSATR. 3 WW domains span residues 229–262, 331–364, and 387–420; these read GRLP…RPTL, GELP…DPRR, and GPLP…DPRL. Residue Lys-258 forms a Glycyl lysine isopeptide (Lys-Gly) (interchain with G-Cter in ubiquitin) linkage. Positions 705–809 constitute an HECT domain; it reads YRGYQESDEV…VEETIGFGQE (105 aa). The active-site Glycyl thioester intermediate is Cys-777.

It belongs to the RSP5/NEDD4 family. In terms of assembly, component of the RSP5-BUL1/2 ubiquitin ligase complex composed of at least RSP5 and BUL1 or BUL2. Component of the RSP5-UBA1-UBC5 ubiquitin ligase complex composed of E3 RSP5, E1 UBA1 and E2 UBC5. Also forms a ternary complex with RUP1 and UBP2. Interacts (via WW domains) with LSB1. Interacts (via WW domains) with PIN3/LSB2. Interacts (via WW domains) with RCR1 (via PY motifs). Interacts with UBP2; the interaction is direct. Interacts with HSE1. Interacts with LAS17. Interacts with ROG3. Interacts with ROD1. Interacts with RVS167. Interacts with ubiquitin. In terms of processing, the ubiquitination appears to be the result of an intramolecular transfer of ubiquitin.

It localises to the cytoplasm. The protein resides in the nucleus. It is found in the cytoskeleton. The protein localises to the actin patch. The catalysed reaction is S-ubiquitinyl-[E2 ubiquitin-conjugating enzyme]-L-cysteine + [acceptor protein]-L-lysine = [E2 ubiquitin-conjugating enzyme]-L-cysteine + N(6)-ubiquitinyl-[acceptor protein]-L-lysine.. Its pathway is protein modification; protein ubiquitination. E3 ubiquitin-protein ligase which accepts ubiquitin from an E2 ubiquitin-conjugating enzyme in the form of a thioester and then directly transfers the ubiquitin to targeted substrates. Component of a RSP5 ubiquitin ligase complex which specifies polyubiquitination and intracellular trafficking of the general amino acid permease GAP1 as well as other cell surface proteins like GAP1, FUR4, MAL61, PMA1 and STE2. The RSP5-BUL1/2 complex is also necessary for the heat-shock element (HSE)-mediated gene expression, nitrogen starvation GLN3-dependent transcription, pressure-induced differential regulation of the two tryptophan permeases TAT1 and TAT2 and sorting efficiency into multivesicular bodies. The RSP5-UBA1-UBC5 ubiquitin ligase complex ubiquitinates RPO21 forming 'Lys-63'-linked polyubiquitin chains. Plays a role in tolerance to o-dinitrobenzene. Involved in actin cytoskeleton organization and dynamics. Ubiquitinates the LAS17-binding proteins LSB1 and PIN3/LSB2 without directing them for degradation and affects LAS17 levels in a SLA1-dependent and LSB1/2-independent manner. Also involved in the degradation of non-functional 18S rRNAs in response to stalled ribosomes by mediating polyubiquitination of monoubiquitinated RPS3/uS3: mediates formation of 'Lys-63'-linked polyubiquitin chains on monoubiquitined RPS3/uS3, promoting the degradation of non-functional 18S rRNAs. This chain is E3 ubiquitin-protein ligase RSP5 (RSP5), found in Saccharomyces cerevisiae (strain ATCC 204508 / S288c) (Baker's yeast).